An 89-amino-acid chain; its full sequence is Small ribosomal subunit protein uS14 (89 aa).

It belongs to the universal ribosomal protein uS14 family. Part of the 30S ribosomal subunit. Contacts proteins S3 and S10.

Functionally, binds 16S rRNA, required for the assembly of 30S particles and may also be responsible for determining the conformation of the 16S rRNA at the A site. This chain is Small ribosomal subunit protein uS14, found in Phytoplasma australiense.